We begin with the raw amino-acid sequence, 180 residues long: MAKRGKNKIEWDNTDWEQEEEEIIWVSKSEIKRDAEALKKLGEKLVDLTKAKLEKIPLEEKLLEAIELAQRLQKEARRRQLQYIGKLLRNIDVEPIQDALEKLENKHQQQQAMLHKLEMLRDTLIDNPEAITQFLEQHPDADRQHLRNLVRAAQKEKAQNKPPKAYREIFQYLKDFMLED.

It belongs to the DarP family.

It localises to the cytoplasm. Its function is as follows. Member of a network of 50S ribosomal subunit biogenesis factors which assembles along the 30S-50S interface, preventing incorrect 23S rRNA structures from forming. Promotes peptidyl transferase center (PTC) maturation. This Pasteurella multocida (strain Pm70) protein is Dual-action ribosomal maturation protein DarP.